Reading from the N-terminus, the 316-residue chain is MLVTLGLLTSFFSFLYMVAPSIRKFFAGGVCRTNVQLPGKVVVITGANTGIGKETARELASRGARVYIACRDVLKGESAASEIRVDTKNSQVLVRKLDLSDTKSIRAFAEGFLAEEKQLHILINNAGVMMCPYSKTADGFETHLGVNHLGHFLLTYLLLERLKVSAPARVVNVSSVAHHIGKIPFHDLQSEKRYSRGFAYCHSKLANVLFTRELAKRLQGTGVTTYAVHPGVVRSELVRHSSLLCLLWRLFSPFVKTAREGAQTSLHCALAEGLEPLSGKYFSDCKRTWVSPRARNNKTAERLWNVSCELLGIRWE.

Position 46-52 (46-52 (GANTGIG)) interacts with NADP(+). Substrate is bound at residue serine 175. The Proton acceptor role is filled by tyrosine 200.

The protein belongs to the short-chain dehydrogenases/reductases (SDR) family. Widely expressed, mostly in retina, kidney, brain, skeletal muscle, pancreas and stomach.

Its subcellular location is the endoplasmic reticulum membrane. It catalyses the reaction all-trans-retinol + NADP(+) = all-trans-retinal + NADPH + H(+). The catalysed reaction is 11-cis-retinol + NADP(+) = 11-cis-retinal + NADPH + H(+). The enzyme catalyses 9-cis-retinol + NADP(+) = 9-cis-retinal + NADPH + H(+). It carries out the reaction a 4-hydroxynonen-1-ol + NADP(+) = a 4-hydroxynonenal + NADPH + H(+). It catalyses the reaction (E)-non-2-en-1-ol + NADP(+) = (E)-non-2-enal + NADPH + H(+). The catalysed reaction is (Z)-non-6-en-1-ol + NADP(+) = (Z)-non-6-enal + NADPH + H(+). The enzyme catalyses nonan-1-ol + NADP(+) = nonanal + NADPH + H(+). It functions in the pathway cofactor metabolism; retinol metabolism. Functionally, retinoids dehydrogenase/reductase with a clear preference for NADP. Displays high activity towards 9-cis, 11-cis and all-trans-retinal. Shows very weak activity towards 13-cis-retinol. Also exhibits activity, albeit with lower affinity than for retinaldehydes, towards lipid peroxidation products (C9 aldehydes) such as 4-hydroxynonenal and trans-2-nonenal. May play an important function in photoreceptor cells to detoxify 4-hydroxynonenal and potentially other toxic aldehyde products resulting from lipid peroxidation. Has no dehydrogenase activity towards steroids. In Homo sapiens (Human), this protein is Retinol dehydrogenase 12 (RDH12).